The following is a 205-amino-acid chain: Protein DEPP1 (205 aa).

Polar residues-rich tracts occupy residues 55 to 64 (DKVTAQSRPN) and 83 to 101 (GDSS…SPGT). The segment at 55–171 (DKVTAQSRPN…RHQTSDLKSW (117 aa)) is disordered. Basic and acidic residues predominate over residues 138-155 (MGKDTGRLCEARVPEHSL).

It localises to the cytoplasm. The protein localises to the peroxisome. The protein resides in the mitochondrion. Acts as a critical modulator of FOXO3-induced autophagy via increased cellular ROS. The polypeptide is Protein DEPP1 (Depp1) (Mus musculus (Mouse)).